Here is a 182-residue protein sequence, read N- to C-terminus: Ribosome maturation factor RimM (182 aa).

The 81-residue stretch at Glu102–Phe182 folds into the PRC barrel domain.

The protein belongs to the RimM family. In terms of assembly, binds ribosomal protein uS19.

Its subcellular location is the cytoplasm. In terms of biological role, an accessory protein needed during the final step in the assembly of 30S ribosomal subunit, possibly for assembly of the head region. Essential for efficient processing of 16S rRNA. May be needed both before and after RbfA during the maturation of 16S rRNA. It has affinity for free ribosomal 30S subunits but not for 70S ribosomes. This chain is Ribosome maturation factor RimM, found in Salmonella enteritidis PT4 (strain P125109).